The chain runs to 89 residues: Mapacalcine (89 aa).

Q89 carries the glutamine amide modification.

In terms of assembly, homodimer. Contains disulfide bonds which may also be involved in dimerization.

Blocks calcium currents via interaction with a yet unknown target protein. Has no effect on L-type, T-type, N-type or P/Q-type voltage-gated calcium channels (VGCC). Has no effect on voltage-gated potassium or chloride channels. Blocks non-L-type VGCC calcium currents in mouse duodenal myocytes (IC(50)=0.2 uM). Blocks calcium influx induced by hypoxia/reoxygenation in rat hepatocytes. The polypeptide is Mapacalcine (Pione vastifica (Boring sponge)).